The chain runs to 175 residues: DPY30 domain-containing protein 1 (175 aa).

The span at 94–112 (QQKEKQKSEDFETGQEKSF) shows a compositional bias: basic and acidic residues. 2 disordered regions span residues 94–134 (QQKE…QAEE) and 152–175 (APNLSRVEELDEPMLSDNGVSAPP).

It belongs to the dpy-30 family. As to quaternary structure, component of the axonemal radial spoke complex 1 (RS1), at least composed of spoke head proteins RSPH1, RSPH3, RSPH9 and the cilia-specific component RSPH4A or sperm-specific component RSPH6A, spoke stalk proteins RSPH14, DNAJB13, DYDC1, ROPN1L and NME5, and the anchor protein IQUB. Interacts with SH3GL3.

Its subcellular location is the cytoplasm. It is found in the cytoskeleton. The protein resides in the flagellum axoneme. Functions as part of axonemal radial spoke complexes that play an important part in the motility of sperm and cilia. Plays a crucial role during acrosome biogenesis. This is DPY30 domain-containing protein 1 (Dydc1) from Mus musculus (Mouse).